The chain runs to 1305 residues: Rho GTPase-activating protein 33 (1305 aa).

The segment at 1-64 (MLQAQKQSDP…KPGKRLSAPR (64 aa)) is disordered. Ser32 bears the Phosphoserine mark. One can recognise a PX; atypical domain in the interval 83–192 (FGHIQLLLSP…CGPVLTWMEL (110 aa)). The SH3 domain maps to 210-272 (PAVAAAHVVK…PSECVELFTE (63 aa)). Residues 339–534 (CDLGEHLSNS…FLLTHVEVLF (196 aa)) enclose the Rho-GAP domain. 3 disordered regions span residues 575–818 (RTQG…LDIS), 864–1054 (LSDT…SFFS), and 1115–1305 (SYSG…RSYC). A compositionally biased stretch (low complexity) spans 582 to 595 (TPTEPTTPKTPASP). Ser594 carries the post-translational modification Phosphoserine. The segment covering 596 to 608 (VERRKRERAEKQR) has biased composition (basic and acidic residues). Positions 646 to 669 (SGSRPDTVTLRSAKSEESLSSQAS) are enriched in polar residues. Ser660 carries the phosphoserine modification. Positions 694–733 (APAGSCESLSSSSSSSSSSSSSSSSESSAGGLGPLSGSPS) are enriched in low complexity. Ser749 is subject to Phosphoserine. Over residues 774–786 (PGDPAPPASPAPP) the composition is skewed to pro residues. A compositionally biased stretch (low complexity) spans 787 to 798 (ASASAFPPRATP). A compositionally biased stretch (polar residues) spans 864–873 (LSDTCQQEIS). Residues 895–915 (LLPPPLPLLRPGGAPPPPPKN) are compositionally biased toward pro residues. A compositionally biased stretch (low complexity) spans 916–940 (PARLMALALAERAQQVAEQQSQQEQ). Polar residues-rich tracts occupy residues 992 to 1020 (RQQS…SQVS), 1039 to 1054 (SPCS…SFFS), and 1115 to 1125 (SYSGPSRSWSP). At Tyr1188 the chain carries Phosphotyrosine. A compositionally biased stretch (low complexity) spans 1194–1208 (GPRGPSPASSSSSSP). Position 1263 is an omega-N-methylarginine (Arg1263). The span at 1292–1305 (SWSLHSEGQTRSYC) shows a compositional bias: polar residues.

It belongs to the PX domain-containing GAP family. As to quaternary structure, specifically interacts with CDC42 and RHOQ/TC10 through its Rho-GAP domain. Interacts with NEK6. In terms of tissue distribution, highly expressed in brain and testis. Also expressed in white adipose tissue (WAT) and muscle at a low level.

The protein localises to the cell membrane. Functionally, may be involved in several stages of intracellular trafficking. Could play an important role in the regulation of glucose transport by insulin. May act as a downstream effector of RHOQ/TC10 in the regulation of insulin-stimulated glucose transport. This is Rho GTPase-activating protein 33 (Arhgap33) from Mus musculus (Mouse).